The following is a 350-amino-acid chain: ATPase GET3 (350 aa).

An ATP-binding site is contributed by 26–33 (KGGVGKTT). D57 is a catalytic residue. The ATP site is built by E243 and N270. Zn(2+) contacts are provided by C282 and C285.

This sequence belongs to the arsA ATPase family. Homodimer. Component of the Golgi to ER traffic (GET) complex, which is composed of GET1, GET2 and GET3. Within the complex, GET1 and GET2 form a heterotetramer which is stabilized by phosphatidylinositol binding and which binds to the GET3 homodimer. Interacts with the chloride channel protein GEF1.

Its subcellular location is the cytoplasm. It is found in the endoplasmic reticulum. The protein resides in the golgi apparatus. Its function is as follows. ATPase required for the post-translational delivery of tail-anchored (TA) proteins to the endoplasmic reticulum. Recognizes and selectively binds the transmembrane domain of TA proteins in the cytosol. This complex then targets to the endoplasmic reticulum by membrane-bound receptors GET1 and GET2, where the tail-anchored protein is released for insertion. This process is regulated by ATP binding and hydrolysis. ATP binding drives the homodimer towards the closed dimer state, facilitating recognition of newly synthesized TA membrane proteins. ATP hydrolysis is required for insertion. Subsequently, the homodimer reverts towards the open dimer state, lowering its affinity for the GET1-GET2 receptor, and returning it to the cytosol to initiate a new round of targeting. Cooperates with the HDEL receptor ERD2 to mediate the ATP-dependent retrieval of resident ER proteins that contain a C-terminal H-D-E-L retention signal from the Golgi to the ER. Involved in low-level resistance to the oxyanions arsenite and arsenate, and in heat tolerance. The polypeptide is ATPase GET3 (Candida dubliniensis (strain CD36 / ATCC MYA-646 / CBS 7987 / NCPF 3949 / NRRL Y-17841) (Yeast)).